We begin with the raw amino-acid sequence, 214 residues long: Adenylate kinase (214 aa).

Position 10-15 (10-15) interacts with ATP; the sequence is GAGKGT. Residues 30–59 form an NMP region; sequence STGDMFRDHKARGTEIGKQVQAIMDAGGLV. AMP-binding positions include T31, R36, 57–59, 85–88, and Q92; these read GLV and GYPR. An LID region spans residues 126-163; sequence GRRSCPRCGAVYHVSQNPPHRAGFCDRDDTALVQREDD. An ATP-binding site is contributed by R127. Zn(2+) contacts are provided by C130 and C133. 136 to 137 is an ATP binding site; sequence VY. Zn(2+)-binding residues include C150 and D153. AMP contacts are provided by R160 and R171. Position 199 (G199) interacts with ATP.

This sequence belongs to the adenylate kinase family. Monomer.

The protein resides in the cytoplasm. It catalyses the reaction AMP + ATP = 2 ADP. The protein operates within purine metabolism; AMP biosynthesis via salvage pathway; AMP from ADP: step 1/1. In terms of biological role, catalyzes the reversible transfer of the terminal phosphate group between ATP and AMP. Plays an important role in cellular energy homeostasis and in adenine nucleotide metabolism. The chain is Adenylate kinase from Anaeromyxobacter sp. (strain K).